Consider the following 279-residue polypeptide: Pantothenate synthetase (279 aa).

31-38 is an ATP binding site; that stretch reads MGALHEGH. His38 serves as the catalytic Proton donor. (R)-pantoate is bound at residue Gln62. Gln62 lines the beta-alanine pocket. 148-151 is an ATP binding site; the sequence is GEKD. (R)-pantoate is bound at residue Gln154. ATP is bound by residues Val177 and 185 to 188; that span reads LSSR.

This sequence belongs to the pantothenate synthetase family. In terms of assembly, homodimer.

The protein resides in the cytoplasm. The enzyme catalyses (R)-pantoate + beta-alanine + ATP = (R)-pantothenate + AMP + diphosphate + H(+). It participates in cofactor biosynthesis; (R)-pantothenate biosynthesis; (R)-pantothenate from (R)-pantoate and beta-alanine: step 1/1. Its function is as follows. Catalyzes the condensation of pantoate with beta-alanine in an ATP-dependent reaction via a pantoyl-adenylate intermediate. The sequence is that of Pantothenate synthetase from Cereibacter sphaeroides (strain ATCC 17029 / ATH 2.4.9) (Rhodobacter sphaeroides).